The chain runs to 91 residues: DNA-directed RNA polymerase subunit omega (91 aa).

It belongs to the RNA polymerase subunit omega family. In terms of assembly, the RNAP catalytic core consists of 2 alpha, 1 beta, 1 beta' and 1 omega subunit. When a sigma factor is associated with the core the holoenzyme is formed, which can initiate transcription.

It carries out the reaction RNA(n) + a ribonucleoside 5'-triphosphate = RNA(n+1) + diphosphate. Functionally, promotes RNA polymerase assembly. Latches the N- and C-terminal regions of the beta' subunit thereby facilitating its interaction with the beta and alpha subunits. The polypeptide is DNA-directed RNA polymerase subunit omega (Erwinia tasmaniensis (strain DSM 17950 / CFBP 7177 / CIP 109463 / NCPPB 4357 / Et1/99)).